The primary structure comprises 445 residues: MNEEYDVIVLGTGLTECILSGIMTVNGKKVLHMDRNPYYGGESASITPLEDLYKRFKIPGAPPASMGRGRDWNLDLIPKFLMANGQLVKMLLYTEVTRYLDFKVTEGSFVYKGGKIYKVPSTEAEALASSLMGLFEKRRFRKFLVYVANFDEKDPRTFEGIDPKKTAIGEVYKKFDLGQDVIDFTGHALALYRTDDYLDQPCCETINRIKLYSESLARYGKSPYLYPLYGLGELPQGFARLSAIYGGTYMLNKPIEEIIVQNGKVIGVKSEGEVARCKQLICDPSYVKDRVEKVGQVIRVICILSHPIKNTNDANSCQIIIPQNQVNRKSDIYVCMISSAHNVAAQGKYIAIVSTTAETKEPEKEIRPALELLEPIEQKFVSISDLLVPKDLGTESQIFISRTYDATTHFETTCDDIKNIYKRMTGSEFDFEEMKRKKNDIYGED.

M1 is modified (N-acetylmethionine). N6-succinyllysine is present on K57. An N6-acetyllysine modification is found at K112. A Phosphoserine modification is found at S130. N6-acetyllysine is present on K269. S382 is modified (phosphoserine).

Belongs to the Rab GDI family. In terms of assembly, interacts with RHOH. Interacts with the GDP-bound inactive forms of RAB3A, RAB3B, RAB3C, RAB5A, RAB5B, RAB5C, RAB8A, RAB8B, RAB10, RAB12, RAB35, and RAB43; binds RAB3D to a lesser extent. Interacts with DZIP1; this interaction negatively regulates the interaction of GDI2 with GDP-bound RAB8A.

The protein resides in the cytoplasm. It is found in the membrane. The protein localises to the golgi apparatus. It localises to the trans-Golgi network. In terms of biological role, GDP-dissociation inhibitor preventing the GDP to GTP exchange of most Rab proteins. By keeping these small GTPases in their inactive GDP-bound form regulates intracellular membrane trafficking. Negatively regulates protein transport to the cilium and ciliogenesis through the inhibition of RAB8A. The sequence is that of Rab GDP dissociation inhibitor beta (GDI2) from Canis lupus familiaris (Dog).